The primary structure comprises 71 residues: MKLCVTFLLVLVILPSVTGVKSSERTLSGAALRGDRGTCSGRGQECKHDSDCCGHLCCAGITCQFTYIPCK.

The first 19 residues, 1–19 (MKLCVTFLLVLVILPSVTG), serve as a signal peptide directing secretion. A propeptide spanning residues 20 to 47 (VKSSERTLSGAALRGDRGTCSGRGQECK) is cleaved from the precursor. 4 disulfides stabilise this stretch: Cys39–Cys53, Cys46–Cys58, Cys52–Cys63, and Cys57–Cys70.

The protein belongs to the I1 superfamily. As to expression, expressed by the venom duct.

The protein resides in the secreted. The polypeptide is Conotoxin Tx11.3 (Conus textile (Cloth-of-gold cone)).